Reading from the N-terminus, the 437-residue chain is Protein farnesyltransferase subunit beta (437 aa).

5 PFTB repeats span residues 123-164, 174-215, 222-263, 270-312, and 332-374; these read ATDV…CIIG, REKL…SLTN, FEGT…VILK, LKSL…PLLH, and QQAL…SIAQ. (2E,6E)-farnesyl diphosphate-binding positions include 248-251 and 291-294; these read HGGY and RCNK. 2 residues coordinate Zn(2+): D297 and C299. 300-303 serves as a coordination point for (2E,6E)-farnesyl diphosphate; that stretch reads YSFW. H362 contacts Zn(2+). S432 carries the post-translational modification Phosphoserine. T436 carries the post-translational modification Phosphothreonine.

It belongs to the protein prenyltransferase subunit beta family. In terms of assembly, heterodimer of FNTA and FNTB. Requires Zn(2+) as cofactor.

The enzyme catalyses L-cysteinyl-[protein] + (2E,6E)-farnesyl diphosphate = S-(2E,6E)-farnesyl-L-cysteinyl-[protein] + diphosphate. Its function is as follows. Essential subunit of the farnesyltransferase complex. Catalyzes the transfer of a farnesyl moiety from farnesyl diphosphate to a cysteine at the fourth position from the C-terminus of several proteins having the C-terminal sequence Cys-aliphatic-aliphatic-X. This chain is Protein farnesyltransferase subunit beta (Fntb), found in Mus musculus (Mouse).